The sequence spans 258 residues: UPF0246 protein YaaA (258 aa).

Belongs to the UPF0246 family.

This chain is UPF0246 protein YaaA, found in Escherichia coli O157:H7.